Here is a 159-residue protein sequence, read N- to C-terminus: NADH-quinone oxidoreductase subunit I (159 aa).

4Fe-4S ferredoxin-type domains lie at 51–80 and 90–119; these read RRYE…IESD and TRYD…EGPN. Cys60, Cys63, Cys66, Cys70, Cys99, Cys102, Cys105, and Cys109 together coordinate [4Fe-4S] cluster.

It belongs to the complex I 23 kDa subunit family. NDH-1 is composed of 14 different subunits. Subunits NuoA, H, J, K, L, M, N constitute the membrane sector of the complex. [4Fe-4S] cluster is required as a cofactor.

The protein resides in the cell inner membrane. The enzyme catalyses a quinone + NADH + 5 H(+)(in) = a quinol + NAD(+) + 4 H(+)(out). Its function is as follows. NDH-1 shuttles electrons from NADH, via FMN and iron-sulfur (Fe-S) centers, to quinones in the respiratory chain. The immediate electron acceptor for the enzyme in this species is believed to be ubiquinone. Couples the redox reaction to proton translocation (for every two electrons transferred, four hydrogen ions are translocated across the cytoplasmic membrane), and thus conserves the redox energy in a proton gradient. The polypeptide is NADH-quinone oxidoreductase subunit I (Rickettsia prowazekii (strain Madrid E)).